Reading from the N-terminus, the 422-residue chain is Metallocarboxypeptidase A (422 aa).

A signal peptide spans 1-17 (MRSVLSLALLAANVVTA). Positions 18–112 (AVVSPFDYSG…FEAYSAGYAP (95 aa)) are cleaved as a propeptide — activation peptide. Residues 119-419 (SYHSYQDHIS…AGTVAMLKAV (301 aa)) enclose the Peptidase M14 domain. Zn(2+)-binding residues include H179 and E182. Residues 179-182 (HARE), R237, and 254-255 (NR) each bind substrate. Residues C248 and C271 are joined by a disulfide bond. H309 contacts Zn(2+). 310-311 (SY) serves as a coordination point for substrate. The active-site Proton donor/acceptor is the E385.

It belongs to the peptidase M14 family. Zn(2+) serves as cofactor.

The protein resides in the secreted. Functionally, extracellular metalloprotease that contributes to pathogenicity. This Trichophyton equinum (Horse ringworm fungus) protein is Metallocarboxypeptidase A (MCPA).